Reading from the N-terminus, the 195-residue chain is Inosine triphosphate pyrophosphatase (195 aa).

Position 13 to 18 (13 to 18) interacts with ITP; sequence TGNAKK. Glu-43 provides a ligand contact to Mg(2+). Residues Lys-55, 71 to 72, Lys-88, 148 to 151, Lys-171, and 176 to 177 each bind ITP; these read DT, FGWD, and HR.

The protein belongs to the HAM1 NTPase family. In terms of assembly, homodimer. It depends on Mg(2+) as a cofactor. The cofactor is Mn(2+).

The protein resides in the cytoplasm. The enzyme catalyses ITP + H2O = IMP + diphosphate + H(+). The catalysed reaction is dITP + H2O = dIMP + diphosphate + H(+). It catalyses the reaction XTP + H2O = XMP + diphosphate + H(+). It carries out the reaction N(6)-hydroxy-dATP + H2O = N(6)-hydroxy-dAMP + diphosphate + H(+). Functionally, pyrophosphatase that hydrolyzes the non-canonical purine nucleotides inosine triphosphate (ITP), deoxyinosine triphosphate (dITP) as well as 2'-deoxy-N-6-hydroxylaminopurine triphosphate (dHAPTP) and xanthosine 5'-triphosphate (XTP) to their respective monophosphate derivatives. The enzyme does not distinguish between the deoxy- and ribose forms. Probably excludes non-canonical purines from RNA and DNA precursor pools, thus preventing their incorporation into RNA and DNA and avoiding chromosomal lesions. This chain is Inosine triphosphate pyrophosphatase (itpa), found in Xenopus laevis (African clawed frog).